The following is a 497-amino-acid chain: Probable sensor kinase SilS (497 aa).

At 1–15 (MHSKPSRLPFSLALR) the chain is on the cytoplasmic side. The chain crosses the membrane as a helical span at residues 16–36 (LTFFISLSTILAFIAFTWFML). Topologically, residues 37–186 (HSVEKHFAEQ…HLHYLDALKK (150 aa)) are periplasmic. Residues 187 to 207 (NLIAIAVVISLLIVLIIRIAV) traverse the membrane as a helical segment. The HAMP domain occupies 208-261 (RQGHLPLRNVSNAIKNITSENLDARLEPTRVPIELEQLVISFNHMIGKIEDVFT). Topologically, residues 208–497 (RQGHLPLRNV…KMIPDTQCWE (290 aa)) are cytoplasmic. Positions 269–487 (DIAHEIRTPI…RFILSVPRLE (219 aa)) constitute a Histidine kinase domain. The residue at position 272 (His272) is a Phosphohistidine; by autocatalysis.

It localises to the cell inner membrane. It carries out the reaction ATP + protein L-histidine = ADP + protein N-phospho-L-histidine.. Its function is as follows. Component of the sil cation-efflux system that confers resistance to silver. Probable member of a two-component regulatory system SilS/SilR. May activate SilR by phosphorylation. The polypeptide is Probable sensor kinase SilS (silS) (Salmonella typhimurium).